The chain runs to 105 residues: Phosphoribosyl-AMP cyclohydrolase (105 aa).

Position 72 (aspartate 72) interacts with Mg(2+). Residue cysteine 73 coordinates Zn(2+). The Mg(2+) site is built by aspartate 74 and aspartate 76. 2 residues coordinate Zn(2+): cysteine 89 and cysteine 96.

Belongs to the PRA-CH family. Homodimer. The cofactor is Mg(2+). Requires Zn(2+) as cofactor.

It is found in the cytoplasm. It catalyses the reaction 1-(5-phospho-beta-D-ribosyl)-5'-AMP + H2O = 1-(5-phospho-beta-D-ribosyl)-5-[(5-phospho-beta-D-ribosylamino)methylideneamino]imidazole-4-carboxamide. It functions in the pathway amino-acid biosynthesis; L-histidine biosynthesis; L-histidine from 5-phospho-alpha-D-ribose 1-diphosphate: step 3/9. Its function is as follows. Catalyzes the hydrolysis of the adenine ring of phosphoribosyl-AMP. This chain is Phosphoribosyl-AMP cyclohydrolase, found in Listeria monocytogenes serotype 4b (strain CLIP80459).